A 321-amino-acid chain; its full sequence is Glutamyl-Q tRNA(Asp) synthetase (321 aa).

L-glutamate contacts are provided by residues 25-29 (RFAPS) and E61. Residues 28-38 (PSPSGDLHFGS) carry the 'HIGH' region motif. Zn(2+) contacts are provided by C117, C119, Y131, and C135. L-glutamate-binding residues include Y188 and R206. The short motif at 244–248 (KLSKQ) is the 'KMSKS' region element. An ATP-binding site is contributed by K247.

Belongs to the class-I aminoacyl-tRNA synthetase family. GluQ subfamily. Zn(2+) is required as a cofactor.

Functionally, catalyzes the tRNA-independent activation of glutamate in presence of ATP and the subsequent transfer of glutamate onto a tRNA(Asp). Glutamate is transferred on the 2-amino-5-(4,5-dihydroxy-2-cyclopenten-1-yl) moiety of the queuosine in the wobble position of the QUC anticodon. This chain is Glutamyl-Q tRNA(Asp) synthetase, found in Yersinia pestis.